A 336-amino-acid polypeptide reads, in one-letter code: E3 ubiquitin-protein ligase RING2 (336 aa).

S2 carries the N-acetylserine modification. An interaction with HIP2 region spans residues 2–179 (SQAVQTNGTQ…AEDNGDSSHC (178 aa)). Phosphoserine is present on S41. An RING-type zinc finger spans residues 51-91 (CPICLDMLKNTMTTKECLHRFCADCIITALRSGNKECPTCR). Residues 93–98 (KLVSKR) form an interaction with nucleosomes via an acidic patch on histone H2A and histone H2B region. K112 is covalently cross-linked (Glycyl lysine isopeptide (Lys-Gly) (interchain with G-Cter in ubiquitin)). Phosphoserine is present on residues S143 and S168. The tract at residues 157 to 213 (QRGKKQQIENGSGAEDNGDSSHCSNASTHSNQEAGPSNKRTKTSDDSGLEPDNNNAA) is disordered. Over residues 176–191 (SSHCSNASTHSNQEAG) the composition is skewed to polar residues. Glycyl lysine isopeptide (Lys-Gly) (interchain with G-Cter in SUMO2) cross-links involve residues K249 and K323.

As to quaternary structure, component of chromatin-associated Polycomb (PcG) complexes. Component of a number of PRC1-like complexes; these complexes contain either the polycomb group ring finger protein PCGF1, or PCGF2, or PCGF3, or BMI1, or PCGF5, or PCGF6. Distinct PRC1-like complexes are composed of a RING1 subunit (RING1B or RING1A), one of the six PCGF proteins (PCGF1, PCGF2, PCGF3, BMI1, PCGF5 or PCGF6), one PHC protein (PHC1, PHC2 or PHC3) and one of the CBX proteins (CBX2, CBX4, CBX6, CBX7 or CBX8). Part of a complex that contains RNF2, UB2D3 and BMI1; within that complex RNF2 and BMI1 form a tight heterodimer, where UB2D3 interacts only with RNF2. The complex composed of RNF2, UB2D3 and BMI1 binds nucleosomes, and has activity only with nucleosomal histone H2A. Part of a complex that contains PCGF5, RNF2 and UBE2D3. Part of a complex that contains AUTS2, PCGF5, RNF2, CSNK2B and RYBP. Interacts with CBX6 and CBX8. Interacts with PHC1, PCGF2, RYBP, CBX7, CBX4, CBX2, RNF1/RING1, BMI1 and PHC2. Interaction with RYBP and CBX7 is mutually exclusive; both compete for the same binding site on RNF2. Component of repressive BCOR complex containing a Polycomb group subcomplex at least composed of RYBP, PCGF1, BCOR and RING1. Interacts with CBX2 and PHC1. Interacts with CHTOP. Interacts with AURKB. Part of the E2F6.com-1 complex in G0 phase composed of E2F6, MGA, MAX, TFDP1, CBX3, BAT8, EUHMTASE1, RNF1/RING1, RNF2/RING2, MBLR, L3MBTL2 and YAF2. Component of some MLL1/MLL complex, at least composed of the core components KMT2A/MLL1, ASH2L, HCFC1/HCF1, WDR5 and RBBP5, as well as the facultative components BACC1, CHD8, E2F6, HSP70, INO80C, KANSL1, LAS1L, MAX, MCRS1, MGA, MYST1/MOF, PELP1, PHF20, PRP31, RING2, RUVB1/TIP49A, RUVB2/TIP49B, SENP3, TAF1, TAF4, TAF6, TAF7, TAF9 and TEX10. Interacts with RYBP, HIP2 and TFCP2. Interacts with NUPR1. Interacts with SAMD7 in a PHC2-dependent manner. In terms of processing, monoubiquitinated, by auto-ubiquitination. Polyubiquitinated in the presence of UBE2D3 (in vitro).

Its subcellular location is the nucleus. The protein localises to the cytoplasm. The protein resides in the chromosome. It carries out the reaction S-ubiquitinyl-[E2 ubiquitin-conjugating enzyme]-L-cysteine + [acceptor protein]-L-lysine = [E2 ubiquitin-conjugating enzyme]-L-cysteine + N(6)-ubiquitinyl-[acceptor protein]-L-lysine.. It participates in protein modification; protein ubiquitination. Its function is as follows. E3 ubiquitin-protein ligase that mediates monoubiquitination of 'Lys-119' of histone H2A (H2AK119Ub), thereby playing a central role in histone code and gene regulation. H2AK119Ub gives a specific tag for epigenetic transcriptional repression and participates in X chromosome inactivation of female mammals. May be involved in the initiation of both imprinted and random X inactivation. Essential component of a Polycomb group (PcG) multiprotein PRC1-like complex, a complex class required to maintain the transcriptionally repressive state of many genes, including Hox genes, throughout development. PcG PRC1 complex acts via chromatin remodeling and modification of histones, rendering chromatin heritably changed in its expressibility. E3 ubiquitin-protein ligase activity is enhanced by BMI1/PCGF4. Acts as the main E3 ubiquitin ligase on histone H2A of the PRC1 complex, while RING1 may rather act as a modulator of RNF2/RING2 activity. Plays a role in the transcriptional repression of genes that are required for pluripotency in embryonic stem cells, thereby contributing to differentiation of the ectodermal and endodermal germ layers. Association with the chromosomal DNA is cell-cycle dependent. In resting B- and T-lymphocytes, interaction with AURKB leads to block its activity, thereby maintaining transcription in resting lymphocytes. Also acts as a negative regulator of autophagy by mediating ubiquitination of AMBRA1, leading to its subsequent degradation. This Pongo abelii (Sumatran orangutan) protein is E3 ubiquitin-protein ligase RING2 (RNF2).